The following is a 292-amino-acid chain: tRNA (adenine(9)-N1)-methyltransferase (292 aa).

Residues 72-253 (TFRKGGKKVS…ISLQSKSDKI (182 aa)) form the SAM-dependent MTase TRM10-type domain.

The protein belongs to the class IV-like SAM-binding methyltransferase superfamily. TRM10 family.

It is found in the cytoplasm. The enzyme catalyses adenosine(9) in tRNA + S-adenosyl-L-methionine = N(1)-methyladenosine(9) in tRNA + S-adenosyl-L-homocysteine + H(+). In terms of biological role, catalyzes the S-adenosyl-L-methionine-dependent formation of N(1)-methyladenine at position 9 (m1A9) in tRNA. The chain is tRNA (adenine(9)-N1)-methyltransferase from Sulfolobus acidocaldarius (strain ATCC 33909 / DSM 639 / JCM 8929 / NBRC 15157 / NCIMB 11770).